The chain runs to 236 residues: Small ribosomal subunit protein uS3 (236 aa).

Residues 39 to 107 (IRKFLKREMY…EVFINIKEAK (69 aa)) form the KH type-2 domain. A compositionally biased stretch (basic and acidic residues) spans 214–229 (PEKKEESKSGDKEVRS). Positions 214–236 (PEKKEESKSGDKEVRSKSRRGRQ) are disordered.

This sequence belongs to the universal ribosomal protein uS3 family. Part of the 30S ribosomal subunit. Forms a tight complex with proteins S10 and S14.

In terms of biological role, binds the lower part of the 30S subunit head. Binds mRNA in the 70S ribosome, positioning it for translation. The chain is Small ribosomal subunit protein uS3 from Helicobacter hepaticus (strain ATCC 51449 / 3B1).